The following is a 527-amino-acid chain: Coatomer subunit delta (527 aa).

The segment covering 166-175 has biased composition (basic and acidic residues); sequence IDKSKIEKNK. Disordered regions lie at residues 166–187 and 217–250; these read IDKSKIEKNKPGGFSSMGSMGS and SDVDPINTKPKDRSRSSVTAPPKSSGMKLGKSGK. 2 stretches are compositionally biased toward low complexity: residues 177-187 and 239-250; these read GGFSSMGSMGS and KSSGMKLGKSGK. Positions 282 to 527 constitute an MHD domain; the sequence is TDPFTLTVEE…QLIAQNYQVI (246 aa).

The protein belongs to the adaptor complexes medium subunit family. Delta-COP subfamily. Oligomeric complex that consists of at least the alpha, beta, beta', gamma, delta, epsilon and zeta subunits.

It is found in the cytoplasm. Its subcellular location is the golgi apparatus membrane. The protein resides in the cytoplasmic vesicle. The protein localises to the COPI-coated vesicle membrane. The coatomer is a cytosolic protein complex that binds to dilysine motifs and reversibly associates with Golgi non-clathrin-coated vesicles, which further mediate biosynthetic protein transport from the ER, via the Golgi up to the trans Golgi network. Coatomer complex is required for budding from Golgi membranes, and is essential for the retrograde Golgi-to-ER transport of dilysine-tagged proteins. This chain is Coatomer subunit delta, found in Arabidopsis thaliana (Mouse-ear cress).